A 400-amino-acid chain; its full sequence is Lysophospholipid transporter LplT (400 aa).

12 consecutive transmembrane segments (helical) span residues Val19 to Ala39, Val53 to Ala73, Ala91 to Ile111, Leu139 to Ala159, Ile164 to Ile184, Ser195 to Trp213, Leu227 to Leu247, Tyr257 to Val277, Thr281 to Leu301, Ala304 to Val324, Asn352 to Ala372, and Val373 to Trp393.

It belongs to the major facilitator superfamily. LplT (TC 2.A.1.42) family.

It localises to the cell inner membrane. Its function is as follows. Catalyzes the facilitated diffusion of 2-acyl-glycero-3-phosphoethanolamine (2-acyl-GPE) into the cell. This chain is Lysophospholipid transporter LplT, found in Salmonella agona (strain SL483).